The primary structure comprises 1136 residues: Rho GTPase-activating protein 45 (1136 aa).

2 disordered regions span residues 1 to 73 (MFSR…RHAS) and 91 to 110 (HRSP…GAGP). Phosphoserine occurs at positions 23, 25, 73, 93, and 99. In terms of domain architecture, F-BAR spans 269 to 539 (EEVDVLLQRC…SSKLYDPGQQ (271 aa)). 2 coiled-coil regions span residues 376-412 (EHEK…YVQR) and 440-499 (TATK…RQSD). 4 positions are modified to phosphoserine: S569, S578, S592, and S619. Residues 583 to 662 (DVARPEAAGS…SSTEELVDPD (80 aa)) form a disordered region. Positions 646–655 (TSSSGTMSST) are enriched in low complexity. Residues 702-747 (THRLRKLRTPAKCRECNSYVYFQGAECEECCLACHKKCLETLAIQC) form a Phorbol-ester/DAG-type zinc finger. Residues 761 to 974 (QDFSHAARSA…TLIVHYGLVF (214 aa)) form the Rho-GAP domain. A phosphoserine mark is found at S949, S1027, S1030, and S1032. Positions 1061–1136 (EASLEVASGS…SCRERQPEFV (76 aa)) are disordered. Residues 1095–1109 (QQLSGFNTNQSNNVL) show a composition bias toward polar residues.

As to quaternary structure, HA-1 forms a complex with MHC class I HLA-A*0201. In terms of tissue distribution, expressed on cells of the hematopoietic lineage. Detected in dendritic cells and epidermal Langerhans cells. Expressed in peripheral blood mononuclear cells, in all leukemia/lymphoma cell lines. Detected also in some solid tumors and tissues such as cancerous and non-cancerous tissue.

It is found in the cytoplasm. Its subcellular location is the cell projection. The protein resides in the ruffle membrane. Functionally, contains a GTPase activator for the Rho-type GTPases (RhoGAP) domain that would be able to negatively regulate the actin cytoskeleton as well as cell spreading. However, also contains N-terminally a BAR-domin which is able to play an autoinhibitory effect on this RhoGAP activity. Its function is as follows. Precursor of the histocompatibility antigen HA-1. More generally, minor histocompatibility antigens (mHags) refer to immunogenic peptide which, when complexed with MHC, can generate an immune response after recognition by specific T-cells. The peptides are derived from polymorphic intracellular proteins, which are cleaved by normal pathways of antigen processing. The binding of these peptides to MHC class I or class II molecules and its expression on the cell surface can stimulate T-cell responses and thereby trigger graft rejection or graft-versus-host disease (GVHD) after hematopoietic stem cell transplantation from HLA-identical sibling donor. GVHD is a frequent complication after bone marrow transplantation (BMT), due to mismatch of minor histocompatibility antigen in HLA-matched sibling marrow transplants. Specifically, mismatching for mHag HA-1 which is recognized as immunodominant, is shown to be associated with the development of severe GVHD after HLA-identical BMT. HA-1 is presented to the cell surface by MHC class I HLA-A*0201, but also by other HLA-A alleles. This complex specifically elicits donor-cytotoxic T-lymphocyte (CTL) reactivity against hematologic malignancies after treatment by HLA-identical allogenic BMT. It induces cell recognition and lysis by CTL. In Homo sapiens (Human), this protein is Rho GTPase-activating protein 45.